The sequence spans 170 residues: Der GTPase-activating protein YihI (170 aa).

2 disordered regions span residues 1 to 96 (MKKP…LSPQ) and 145 to 170 (LSYD…RGGN). Basic and acidic residues predominate over residues 20-30 (TREELNQEARD). The span at 31 to 40 (RKRLKKHRGH) shows a compositional bias: basic residues. Acidic residues predominate over residues 147–159 (YDDEEDEEEDEKQ).

Belongs to the YihI family. Interacts with Der.

Functionally, a GTPase-activating protein (GAP) that modifies Der/EngA GTPase function. May play a role in ribosome biogenesis. The sequence is that of Der GTPase-activating protein YihI from Salmonella arizonae (strain ATCC BAA-731 / CDC346-86 / RSK2980).